The chain runs to 146 residues: ATP synthase epsilon chain (146 aa).

Positions glutamine 102–arginine 122 are disordered.

Belongs to the ATPase epsilon chain family. As to quaternary structure, F-type ATPases have 2 components, CF(1) - the catalytic core - and CF(0) - the membrane proton channel. CF(1) has five subunits: alpha(3), beta(3), gamma(1), delta(1), epsilon(1). CF(0) has three main subunits: a, b and c.

It localises to the cell membrane. Its function is as follows. Produces ATP from ADP in the presence of a proton gradient across the membrane. The polypeptide is ATP synthase epsilon chain (Lactobacillus gasseri (strain ATCC 33323 / DSM 20243 / BCRC 14619 / CIP 102991 / JCM 1131 / KCTC 3163 / NCIMB 11718 / NCTC 13722 / AM63)).